The sequence spans 150 residues: MVKQPSVKDVDQHEIVRYIAGFLKKSGKVKVPEWSDLVKLGITKELAPVDSDWYYVRTASVARRLYIRSPTGVGALRRVYGGNKRRGVTPNHFARASGSVIRKALQTLEAIKWVEKHPDGNGRILTKQGRKDLDRIASQMRQNTKITLEP.

It belongs to the eukaryotic ribosomal protein eS19 family.

The protein is Small ribosomal subunit protein eS19S (RPS19S) of Ascaris suum (Pig roundworm).